The chain runs to 320 residues: Methionyl-tRNA formyltransferase (320 aa).

114–117 (SLLP) serves as a coordination point for (6S)-5,6,7,8-tetrahydrofolate.

Belongs to the Fmt family.

It carries out the reaction L-methionyl-tRNA(fMet) + (6R)-10-formyltetrahydrofolate = N-formyl-L-methionyl-tRNA(fMet) + (6S)-5,6,7,8-tetrahydrofolate + H(+). Functionally, attaches a formyl group to the free amino group of methionyl-tRNA(fMet). The formyl group appears to play a dual role in the initiator identity of N-formylmethionyl-tRNA by promoting its recognition by IF2 and preventing the misappropriation of this tRNA by the elongation apparatus. This Acinetobacter baumannii (strain AB0057) protein is Methionyl-tRNA formyltransferase.